Reading from the N-terminus, the 925-residue chain is Neuropilin-2 (925 aa).

The N-terminal stretch at 1 to 22 (MDMFPLTWIFLALYFSGHKVRS) is a signal peptide. Topologically, residues 23-858 (QQDPPCGGRL…EKSWLYTLDP (836 aa)) are extracellular. Disulfide bonds link C28–C55, C83–C105, and C149–C175. CUB domains lie at 28–142 (CGGR…YEIF) and 149–267 (CSKN…YYLV). N152 and N157 each carry an N-linked (GlcNAc...) asparagine glycan. 3 residues coordinate Ca(2+): E197, D211, and D252. C208 and C230 are joined by a disulfide. Cystine bridges form between C277–C427 and C434–C592. F5/8 type C domains lie at 277–427 (CNAP…LFGC) and 434–592 (CSNM…VLGC). Polar residues predominate over residues 297–310 (STFSDGRWTPQQSR). Residues 297–317 (STFSDGRWTPQQSRLHGDDNG) form a disordered region. Residues 601-621 (VETLGPTVKSEETTTPYPMDE) are disordered. A glycan (N-linked (GlcNAc...) asparagine) is linked at N629. An MAM domain is found at 642 to 802 (SGFNCNFDFP…TDVPLENCME (161 aa)). Over residues 820–830 (YEDEIDDDYEG) the composition is skewed to acidic residues. The disordered stretch occupies residues 820–849 (YEDEIDDDYEGDWNNSSSTSGAGSPSSGKE). N-linked (GlcNAc...) asparagine glycosylation is found at N833 and N834. Residues 835 to 846 (SSSTSGAGSPSS) show a composition bias toward low complexity. A helical transmembrane segment spans residues 859-883 (ILITIIAMSSLGVLLGATCAGLLLY). The Cytoplasmic portion of the chain corresponds to 884–925 (CTCSYSGLSSRSCTTLENYNFELYDGLKHKVKINHQKCCSEA).

It belongs to the neuropilin family. Heterodimer with NRP1. Binds PLXNB1. Found in certain neuronal populations of the CNS, including dorsal root ganglia, and in other non-neuronal tissues including mesenchymal tissue lining in the ribs.

It localises to the membrane. High affinity receptor for semaphorins 3C, 3F, VEGF-165 and VEGF-145 isoforms of VEGF, and the PLGF-2 isoform of PGF. The sequence is that of Neuropilin-2 (Nrp2) from Rattus norvegicus (Rat).